The sequence spans 387 residues: Probable inactive shikimate kinase like 2, chloroplastic (387 aa).

Residues 1–71 (MAAFASGLAI…FNSFSCNCLS (71 aa)) constitute a chloroplast transit peptide. Residues 368–387 (NIKPPGWDPSSDTGPHPQFT) form a disordered region.

The protein belongs to the shikimate kinase family.

It localises to the plastid. The protein resides in the chloroplast. This chain is Probable inactive shikimate kinase like 2, chloroplastic (SKL2), found in Arabidopsis thaliana (Mouse-ear cress).